We begin with the raw amino-acid sequence, 468 residues long: GDNF family receptor alpha-1 (468 aa).

A signal peptide spans 1–24 (MFLATLYFVLPLLDLLMSAEVSGG). A run of 3 repeats spans residues 25–113 (DRLD…LQGN), 150–238 (KGNN…YEER), and 239–342 (ERPN…KNAI). The cysteines at positions 36 and 42 are disulfide-linked. Asn59 carries N-linked (GlcNAc...) asparagine glycosylation. Intrachain disulfides connect Cys154–Cys214, Cys161–Cys167, Cys178–Cys192, Cys187–Cys233, Cys216–Cys221, Cys243–Cys313, Cys250–Cys256, Cys267–Cys285, Cys277–Cys337, and Cys315–Cys325. N-linked (GlcNAc...) asparagine glycans are attached at residues Asn347 and Asn406. Ser430 carries the GPI-anchor amidated serine lipid modification. A propeptide spans 431 to 468 (HITTKSMAAPPSCGLSSLPVMVFTALAALLSVSLAETS) (removed in mature form).

This sequence belongs to the GDNFR family. In terms of assembly, interacts with GDNF ligand and RET: forms a 2:2:2 ternary complex composed of GDNF ligand, GFRA1 and RET receptor. Interacts with SORL1, either alone or in complex with GDNF. Interaction between SORL1 and GFRA1 leads to GFRA1 internalization, but not degradation. As to expression, expressed in the brain, in hippocampal neurons (at protein level). Isoform 1 and isoform 2 are expressed in heart, brain, lung, liver, kidney and testis.

Its subcellular location is the cell membrane. The protein resides in the golgi apparatus. It is found in the trans-Golgi network. The protein localises to the endosome. It localises to the multivesicular body. In terms of biological role, coreceptor for GDNF, a neurotrophic factor that enhances survival and morphological differentiation of dopaminergic neurons and increases their high-affinity dopamine uptake. GDNF-binding leads to autophosphorylation and activation of the RET receptor. The protein is GDNF family receptor alpha-1 (Gfra1) of Mus musculus (Mouse).